The primary structure comprises 64 residues: Drosocin antimicrobial peptides (64 aa).

Residues 1–19 form the signal peptide; sequence MKFTIVFLLLACVFAMAVA. Positions 20-21 are excised as a propeptide; it reads TP. Residue Ser-28 is glycosylated (O-linked (GalNAc...) serine). A glycan (O-linked (GalNAc...) threonine) is linked at Thr-32. Residues 32–40 form a critical for inhibition of translation, possibly due to its role in mediating interactions with bacterial 23S rRNA and peptide chain release factors region; it reads TSHPRPIRV.

Belongs to the drosocin family. In terms of assembly, associates with the bacterial 50S ribosomal complex, occupying the nascent peptide exit tunnel. Interacts with bacterial 23S rRNA; this interaction is direct. Interacts with bacterial rplV/50S ribosomal protein L22; this interaction is direct. Interacts with bacterial prfA/peptide chain release factor RF1; while associated with the bacterial 50S ribosomal complex, this interaction is direct and traps RF1 on the ribosome, inhibiting further translation. Post-translationally, proteolytically cleaved at a pair of basic residues corresponding to the RXK/RR optimal cleavage site for furin proteases to produce two distinct antibacterial peptides. In terms of processing, O-glycosylated. O-glycosylation may be required for efficient uptake by target bacterial cells. Monosaccharide modification of Thr-32 provides better antibacterial activity than disaccharide modification or no modification. O-glycosylation of Thr-32 is not essential for antimicrobial activity but enhances this activity by mediating interactions with the 23S rRNA and increasing the efficiency of translation inhibition.

It is found in the secreted. In terms of biological role, antibacterial peptide with strong anti-Gram-negative bacteria activity. Significantly contributes to antibacterial activity against Enterobacter cloacae but not Providencia burhodogranariea. Inhibitor of bacterial translation machinery that targets translation termination in a prfA- or prfB-dependent manner. Binds within the nascent peptide exit tunnel of the bacterial large ribosomal subunit, potentially interfering with nascent chain translocation that occurs post-peptide bond formation. Binds prfA/RF1 (and potentially prfB/RF2), trapping it on the ribosome after release of the nascent polypeptide chain and preventing further translation. The resulting depletion of peptide chain release factors further disrupts bacterial translation by preventing ribosomal peptide chain release and inducing stop codon readthrough. Entry into target Escherichia coli cells requires the bacterial peptide antibiotic transporter sbmA. Functionally, peptide with significant antibacterial activity against Providencia burhodogranariea but not Enterobacter cloacae. In Drosophila simulans (Fruit fly), this protein is Drosocin antimicrobial peptides (Dro).